Consider the following 358-residue polypeptide: MFDQLDIVEERYEQLNELLSDPDVVSDSNKLREYSKEQSDLQKTVDVYRQYKQNKEDIDEIVEMLSETSDKEEVDMLKADMNELKDTLPGLEEELKMLLIPKDPNDDKNVVVEIRAAAGGDEAAIFAGDLYRMYTRFSEGLGYKTGVIEMNDSDHGGFKEISFTINGQGAYSKLKYENGAHRVQRVPETESGGRIHTSTATVAVLPEAEDVEVDIKDADLKIETYRSSGAGGQHVNTTDSAVRITHLPTGIIATSSEKSQIQNREKALKVLKARVYDMKLQEEQEKYDSERKSAVGTGDRSERIRTYNYPQNRVTDHRIGLTIQKLDQIVEGKLDEIIDALTMSEQTEKLKELNNVDL.

Gln-233 carries the N5-methylglutamine modification.

This sequence belongs to the prokaryotic/mitochondrial release factor family. Methylated by PrmC. Methylation increases the termination efficiency of RF1.

The protein localises to the cytoplasm. Functionally, peptide chain release factor 1 directs the termination of translation in response to the peptide chain termination codons UAG and UAA. The polypeptide is Peptide chain release factor 1 (Staphylococcus carnosus (strain TM300)).